Here is a 118-residue protein sequence, read N- to C-terminus: Membrane-anchored ubiquitin-fold protein 3 (118 aa).

In terms of domain architecture, Ubiquitin-like spans 7 to 73 (IDIKFRLYDG…LENNKTVGQC (67 aa)). A lipid anchor (S-palmitoyl cysteine) is attached at cysteine 113. Cysteine methyl ester is present on cysteine 115. Cysteine 115 is lipidated: S-geranylgeranyl cysteine. The propeptide at 116–118 (TIL) is removed in mature form.

Ubiquitous, but three fold higher expression in senescing leaves.

The protein localises to the cell membrane. Its function is as follows. May serve as docking site to facilitate the association of other proteins to the plasma membrane. In Arabidopsis thaliana (Mouse-ear cress), this protein is Membrane-anchored ubiquitin-fold protein 3 (MUB3).